The chain runs to 158 residues: uncharacterized protein (158 aa).

The span at 1–21 shows a compositional bias: polar residues; it reads MPHTGSQHTLQATPKTAQHTG. Disordered stretches follow at residues 1–89 and 107–158; these read MPHT…RVEG and EEEK…DAKT. Basic and acidic residues-rich tracts occupy residues 51–68 and 107–127; these read HTEGCHTQKTRMSADKAG and EEEKASGEARGEDVGSSRESR. The span at 128–137 shows a compositional bias: polar residues; it reads QGTAHKSTCM. Over residues 149–158 the composition is skewed to basic and acidic residues; it reads EIGKVEDAKT.

This is an uncharacterized protein from Encephalitozoon cuniculi (strain GB-M1) (Microsporidian parasite).